Reading from the N-terminus, the 765-residue chain is Carboxysome assembly protein CsoS2 (765 aa).

The span at 1 to 22 (MSTKTSREIALERRKAMSDGGK) shows a compositional bias: basic and acidic residues. Disordered regions lie at residues 1 to 107 (MSTK…RTDV) and 165 to 229 (REAQ…NKNG). Positions 1 to 215 (MSTKTSREIA…RSKTGSTSKQ (215 aa)) are N-terminal domain. Residues 7 to 22 (REIALERRKAMSDGGK) form an N-repeat 1 repeat. A compositionally biased stretch (polar residues) spans 38-63 (SQDINSTGATSSNKKVLTSPSKSNIP). Basic and acidic residues predominate over residues 77–87 (SSKELGIERRK). N-repeat repeat units follow at residues 79–94 (KELG…THGK), 158–173 (RDIV…KHGK), and 196–211 (REIS…KTGS). The segment covering 187–207 (RRGDPDLSSREISQRVRELRS) has biased composition (basic and acidic residues). Residues 216 to 586 (GNGKCRPCGP…LSNCETPPND (371 aa)) form a middle region region. M-repeat repeat units lie at residues 240-289 (KVGK…GQFC), 300-349 (RASV…KKYC), 358-397 (KVMQ…GDQY), 411-460 (KVGS…EKFC), 470-519 (KVGL…NDNC), and 530-580 (RATV…LSNC). Disordered stretches follow at residues 306 to 328 (TTSG…GDEP) and 367 to 413 (GLKV…EKVG). The interval 589 to 734 (YANQEKSASN…AMPPVDNKRN (146 aa)) is C-terminal domain. 2 C-repeat repeats span residues 604–648 (SVNS…GTEQ) and 677–711 (KKEP…EGVS). Disordered stretches follow at residues 611-637 (EKYS…GPFD) and 656-765 (NMTY…GARG). Residues 730–741 (DNKRNDETEKPD) are compositionally biased toward basic and acidic residues. A C-terminal peptide region spans residues 735–765 (DETEKPDFLITGSSGNTRDGQLVTFSGGARG).

This sequence belongs to the CsoS2 family. As to quaternary structure, probably interacts with the carboxysome major shell protein CsoS1 via the N-terminal domain. A CsoS1-CsoS1D-CsoS2 complex can be isolated following expression in E.coli. Interacts via its N-terminal repeats with RuBisCO. Post-translationally, unlike H.neapolitanus and predictions for P.marinus strain MIT 9313, this protein is not thought to have ribosomal frameshifting.

The protein resides in the carboxysome. Functionally, required for alpha-carboxysome (Cb) assembly, mediates interaction between RuBisCO and the Cb shell. The protein is probably highly flexible. The C-terminal repeats act as the encapsulation signal to target proteins to the Cb; they are necessary and sufficient to target both CsoS2 and foreign proteins to the Cb. The N-terminal repeats of this protein bind simultaneously to both subunits of RuBisCO. Probably also interacts with the major shell proteins (CsoS1); that interaction would increase the local concentration of CsoS2 so that it can condense RuBisCO and full carboxysomes can be formed. There are estimated to be 163 CsoS2 proteins per carboxysome; unlike H.neapolitanus only 1 form is seen. This is Carboxysome assembly protein CsoS2 from Prochlorococcus marinus subsp. pastoris (strain CCMP1986 / NIES-2087 / MED4).